A 233-amino-acid chain; its full sequence is MAMSSYMVNSKYVDPKFPPCEEYSQNNYIPEQGSDYYSSSQDTDFQHPGIYPRSNYTEQPFGCTAVQEPTVPRGHVHDKSGQPSPFNAQTESGAPVLVAGPRTCGQQQNTKSQNGTQAKQPAVVYPWMKKVHVTTVNPDYTGSEPKRSRTAYTRQQVLELEKEFHFNRYLTRRRRIEIAHTLCLSERQIKIWFQNRRMKWTKDHKLPNTKGRSAPASSHLQSIHKDQTDITSL.

Residues 124 to 129 (VYPWMK) carry the Antp-type hexapeptide motif. The segment at residues 145-204 (PKRSRTAYTRQQVLELEKEFHFNRYLTRRRRIEIAHTLCLSERQIKIWFQNRRMKWTKDH) is a DNA-binding region (homeobox). A disordered region spans residues 203-233 (DHKLPNTKGRSAPASSHLQSIHKDQTDITSL). Residues 223–233 (IHKDQTDITSL) are compositionally biased toward basic and acidic residues.

The protein belongs to the Antp homeobox family. Deformed subfamily.

The protein resides in the nucleus. In terms of biological role, sequence-specific transcription factor which is part of a developmental regulatory system that provides cells with specific positional identities on the anterior-posterior axis. This is Homeobox protein Hox-D4a (hoxd4a) from Takifugu rubripes (Japanese pufferfish).